A 117-amino-acid polypeptide reads, in one-letter code: Large ribosomal subunit protein uL18 (117 aa).

This sequence belongs to the universal ribosomal protein uL18 family. As to quaternary structure, part of the 50S ribosomal subunit; part of the 5S rRNA/L5/L18/L25 subcomplex. Contacts the 5S and 23S rRNAs.

Its function is as follows. This is one of the proteins that bind and probably mediate the attachment of the 5S RNA into the large ribosomal subunit, where it forms part of the central protuberance. The polypeptide is Large ribosomal subunit protein uL18 (Edwardsiella ictaluri (strain 93-146)).